A 641-amino-acid polypeptide reads, in one-letter code: Bilirubin reductase (641 aa).

Residue glutamine 96 participates in FMN binding. The active-site Proton donor is the arginine 167. Residues lysine 214, arginine 295, and 317 to 318 each bind FMN; that span reads GR. The [4Fe-4S] cluster site is built by cysteine 341, cysteine 344, cysteine 348, and cysteine 360. The FAD site is built by alanine 391, glutamate 410, glutamine 418, lysine 428, and alanine 455.

This sequence in the N-terminal section; belongs to the NADH:flavin oxidoreductase/NADH oxidase family. FAD serves as cofactor. It depends on FMN as a cofactor. [4Fe-4S] cluster is required as a cofactor.

It catalyses the reaction urobilinogen + 4 A = (4Z,15Z)-bilirubin IXalpha + 4 AH2. It carries out the reaction urobilinogen + 2 A = (4Z,15Z)-mesobilirubin IXalpha + 2 AH2. It participates in porphyrin-containing compound metabolism; protoheme degradation. Bilirubin reductase that catalyzes reduction of mesobilirubin and/or bilirubin to urobilinogen, a key step during heme degradation. Urobilinogen then spontaneously degrades into urobilin, which gives urine its distinctive yellow color. This is Bilirubin reductase from Mediterraneibacter gnavus (strain CC55_001C).